The chain runs to 125 residues: GEEVAVKLESQKARHPQLLYESKLYKILQGGVGIPHIRWYGQEKDYNVLVMDLLGPSLEDLFNFCSRRFTMKTVLMLADQMISRIEYVHTKNFIHRDIKPDNFLMGIGRHCNKLFLIDFGLAKKY.

One can recognise a Protein kinase domain in the interval 1–125 (GEEVAVKLES…LIDFGLAKKY (125 aa)). K7 provides a ligand contact to ATP. D97 acts as the Proton acceptor in catalysis.

The protein belongs to the protein kinase superfamily. CK1 Ser/Thr protein kinase family. Casein kinase I subfamily. In terms of assembly, interacts with the Axin complex. Interacts with TUT1, leading to TUT1 phosphorylation. Interacts with FAM83A, FAM83B, FAM83C, FAM83D, FAM83E, FAM83F, FAM83G and FAM83H (via DUF1669). Interaction with FAM83H recruits CSNK1A1 to keratin filaments. In terms of processing, phosphorylated by MTOR in response to mitogenic stimulation, leading to its activation.

It is found in the cytoplasm. The protein localises to the cytoskeleton. The protein resides in the microtubule organizing center. Its subcellular location is the centrosome. It localises to the chromosome. It is found in the centromere. The protein localises to the kinetochore. The protein resides in the nucleus speckle. Its subcellular location is the cilium basal body. It localises to the spindle. It carries out the reaction L-seryl-[protein] + ATP = O-phospho-L-seryl-[protein] + ADP + H(+). The enzyme catalyses L-threonyl-[protein] + ATP = O-phospho-L-threonyl-[protein] + ADP + H(+). Its function is as follows. Casein kinases are operationally defined by their preferential utilization of acidic proteins such as caseins as substrates. It can phosphorylate a large number of proteins. Participates in Wnt signaling. Phosphorylates CTNNB1 at 'Ser-45'. May phosphorylate PER1 and PER2. May play a role in segregating chromosomes during mitosis. May play a role in keratin cytoskeleton disassembly and thereby, it may regulate epithelial cell migration. Acts as a positive regulator of mTORC1 and mTORC2 signaling in response to nutrients by mediating phosphorylation of DEPTOR inhibitor. Acts as an inhibitor of NLRP3 inflammasome assembly by mediating phosphorylation of NLRP3. The sequence is that of Casein kinase I isoform alpha (CSNK1A1) from Sus scrofa (Pig).